Here is a 165-residue protein sequence, read N- to C-terminus: Peptidyl-prolyl cis-trans isomerase A (165 aa).

M1 carries the N-acetylmethionine modification. At V2 the chain carries N-acetylvaline; in Peptidyl-prolyl cis-trans isomerase A, N-terminally processed. One can recognise a PPIase cyclophilin-type domain in the interval 7–163 (FFDIAVDGEP…KKITIADCGQ (157 aa)). The residue at position 28 (K28) is an N6-acetyllysine; alternate. A Glycyl lysine isopeptide (Lys-Gly) (interchain with G-Cter in SUMO2); alternate cross-link involves residue K28. A Glycyl lysine isopeptide (Lys-Gly) (interchain with G-Cter in ubiquitin); alternate cross-link involves residue K28. Residues K44 and K76 each carry the N6-acetyllysine modification. S77 is subject to Phosphoserine. K82 is subject to N6-acetyllysine; alternate. K82 participates in a covalent cross-link: Glycyl lysine isopeptide (Lys-Gly) (interchain with G-Cter in SUMO2); alternate. T93 is subject to Phosphothreonine. The N-linked (GlcNAc...) asparagine glycan is linked to N108. N6-acetyllysine is present on residues K125, K131, and K133.

Belongs to the cyclophilin-type PPIase family. PPIase A subfamily. Interacts with protein phosphatase PPP3CA/calcineurin A. Interacts with isoform 2 of BSG/CD147. Interacts with FOXO1; the interaction promotes FOXO1 dephosphorylation, nuclear accumulation and transcriptional activity. Interacts with integrin ITGA2B:ITGB3; the interaction is ROS and peptidyl-prolyl cis-trans isomerase (PPIase) activity-dependent and is increased in the presence of thrombin. Interacts with MAP3K5. Interacts with TARDBP; the interaction is dependent on the RNA-binding activity of TARDBP and the PPIase activity of PPIA/CYPA and the acetylation of PPIA/CYPA at Lys-125 favors the interaction. Interacts with HNRNPA1, HNRNPA2B1, HNRNPC, RBMX, HNRNPK and HNRNPM. In terms of processing, acetylation at Lys-125 markedly inhibits catalysis of cis to trans isomerization. PPIA acetylation also antagonizes the immunosuppressive effects of cyclosporine by inhibiting the sequential steps of cyclosporine binding and calcineurin inhibition. Acetylation at Lys-125 favors the interaction with TARDBP.

It localises to the cytoplasm. Its subcellular location is the secreted. The protein localises to the nucleus. It carries out the reaction [protein]-peptidylproline (omega=180) = [protein]-peptidylproline (omega=0). Binds cyclosporin A (CsA). CsA mediates some of its effects via an inhibitory action on PPIase. Catalyzes the cis-trans isomerization of proline imidic peptide bonds in oligopeptides. Exerts a strong chemotactic effect on leukocytes partly through activation of one of its membrane receptors BSG/CD147, initiating a signaling cascade that culminates in MAPK/ERK activation. Activates endothelial cells (ECs) in a proinflammatory manner by stimulating activation of NF-kappa-B and ERK, JNK and p38 MAP-kinases and by inducing expression of adhesion molecules including SELE and VCAM1. Induces apoptosis in ECs by promoting the FOXO1-dependent expression of CCL2 and BCL2L11 which are involved in EC chemotaxis and apoptosis. In response to oxidative stress, initiates proapoptotic and antiapoptotic signaling in ECs via activation of NF-kappa-B and AKT1 and up-regulation of antiapoptotic protein BCL2. Negatively regulates MAP3K5/ASK1 kinase activity, autophosphorylation and oxidative stress-induced apoptosis mediated by MAP3K5/ASK1. Necessary for the assembly of TARDBP in heterogeneous nuclear ribonucleoprotein (hnRNP) complexes and regulates TARDBP binding to RNA UG repeats and TARDBP-dependent expression of HDAC6, ATG7 and VCP which are involved in clearance of protein aggregates. Plays an important role in platelet activation and aggregation. Regulates calcium mobilization and integrin ITGA2B:ITGB3 bidirectional signaling via increased ROS production as well as by facilitating the interaction between integrin and the cell cytoskeleton. Binds heparan sulfate glycosaminoglycans. This Symphalangus syndactylus (Siamang) protein is Peptidyl-prolyl cis-trans isomerase A (PPIA).